We begin with the raw amino-acid sequence, 138 residues long: Large ribosomal subunit protein uL16 (138 aa).

Basic residues predominate over residues M1–G19. Residues M1–A21 form a disordered region.

The protein belongs to the universal ribosomal protein uL16 family. Part of the 50S ribosomal subunit.

Its function is as follows. Binds 23S rRNA and is also seen to make contacts with the A and possibly P site tRNAs. The chain is Large ribosomal subunit protein uL16 from Granulibacter bethesdensis (strain ATCC BAA-1260 / CGDNIH1).